A 66-amino-acid chain; its full sequence is Toxin Tppa1 (66 aa).

The region spanning 1-63 (KDGYLVGNDG…TWSRSTNRCG (63 aa)) is the LCN-type CS-alpha/beta domain. Disulfide bonds link Cys-11–Cys-62, Cys-15–Cys-37, Cys-23–Cys-43, and Cys-27–Cys-45.

This sequence belongs to the long (4 C-C) scorpion toxin superfamily. Sodium channel inhibitor family. Beta subfamily. As to expression, expressed by the venom gland.

It localises to the secreted. Functionally, beta toxins bind voltage-independently at site-4 of sodium channels (Nav) and shift the voltage of activation toward more negative potentials thereby affecting sodium channel activation and promoting spontaneous and repetitive firing. In Tityus pachyurus (Colombian scorpion), this protein is Toxin Tppa1.